A 343-amino-acid chain; its full sequence is Dihydroorotase (343 aa).

Residues H14 and H16 each contribute to the Zn(2+) site. Substrate-binding positions include 16-18 (HVR) and N42. Residues K99, H136, and H174 each coordinate Zn(2+). An N6-carboxylysine modification is found at K99. H136 contacts substrate. A substrate-binding site is contributed by L219. Residue D247 coordinates Zn(2+). D247 is an active-site residue. Substrate is bound by residues H251 and A263.

The protein belongs to the metallo-dependent hydrolases superfamily. DHOase family. Class II DHOase subfamily. In terms of assembly, homodimer. The cofactor is Zn(2+).

The catalysed reaction is (S)-dihydroorotate + H2O = N-carbamoyl-L-aspartate + H(+). It functions in the pathway pyrimidine metabolism; UMP biosynthesis via de novo pathway; (S)-dihydroorotate from bicarbonate: step 3/3. In terms of biological role, catalyzes the reversible cyclization of carbamoyl aspartate to dihydroorotate. This Variovorax paradoxus (strain S110) protein is Dihydroorotase.